A 179-amino-acid chain; its full sequence is Lipoprotein signal peptidase (179 aa).

Helical transmembrane passes span 10–30 (LFQF…AIII), 48–68 (VPVL…AFSF), 75–95 (WQHY…IFWL), and 101–121 (NAMI…GNLI). Active-site residues include Asp131 and Asp149. A helical transmembrane segment spans residues 141–161 (HFPAFNIADSAITIGTILLLI).

The protein belongs to the peptidase A8 family.

It localises to the cell inner membrane. The catalysed reaction is Release of signal peptides from bacterial membrane prolipoproteins. Hydrolyzes -Xaa-Yaa-Zaa-|-(S,diacylglyceryl)Cys-, in which Xaa is hydrophobic (preferably Leu), and Yaa (Ala or Ser) and Zaa (Gly or Ala) have small, neutral side chains.. Its pathway is protein modification; lipoprotein biosynthesis (signal peptide cleavage). Its function is as follows. This protein specifically catalyzes the removal of signal peptides from prolipoproteins. The polypeptide is Lipoprotein signal peptidase (Acinetobacter baylyi (strain ATCC 33305 / BD413 / ADP1)).